A 142-amino-acid chain; its full sequence is Large ribosomal subunit protein uL22 (142 aa).

The segment at 122 to 142 (RAEAPEETKPSRGTNKEQKAA) is disordered.

Belongs to the universal ribosomal protein uL22 family. As to quaternary structure, part of the 50S ribosomal subunit.

Functionally, this protein binds specifically to 23S rRNA; its binding is stimulated by other ribosomal proteins, e.g. L4, L17, and L20. It is important during the early stages of 50S assembly. It makes multiple contacts with different domains of the 23S rRNA in the assembled 50S subunit and ribosome. Its function is as follows. The globular domain of the protein is located near the polypeptide exit tunnel on the outside of the subunit, while an extended beta-hairpin is found that lines the wall of the exit tunnel in the center of the 70S ribosome. This is Large ribosomal subunit protein uL22 from Gluconobacter oxydans (strain 621H) (Gluconobacter suboxydans).